Reading from the N-terminus, the 390-residue chain is Pyruvate dehydrogenase E1 component subunit alpha, somatic form, mitochondrial (390 aa).

Residues M1–H29 constitute a mitochondrion transit peptide. An N6-acetyllysine; alternate modification is found at K63. K63 carries the post-translational modification N6-succinyllysine; alternate. The pyruvate site is built by H92, Y118, R119, A157, G165, V167, D196, G197, A198, N225, and Y227. Positions 118 and 119 each coordinate thiamine diphosphate. Thiamine diphosphate-binding residues include G165, V167, D196, G197, A198, and N225. D196 is a binding site for Mg(2+). Mg(2+)-binding residues include N225 and Y227. Phosphoserine; by PDK1 is present on S232. K244 carries the post-translational modification N6-acetyllysine; alternate. K244 carries the post-translational modification N6-succinyllysine; alternate. The residue at position 267 (K267) is an N6-acetyllysine. K277 carries the N6-succinyllysine modification. H292 contacts thiamine diphosphate. Phosphoserine; by PDK1, PDK2, PDK3 and PDK4 is present on S293. S295 is subject to Phosphoserine. S300 bears the Phosphoserine; by PDK1, PDK2, PDK3 and PDK4 mark. Position 301 is a phosphotyrosine (Y301). N6-acetyllysine; alternate is present on K313. At K313 the chain carries N6-succinyllysine; alternate. N6-acetyllysine is present on residues K321 and K336. Position 385 is an N6-succinyllysine (K385).

Heterotetramer of two PDHA1 and two PDHB subunits. The heterotetramer interacts with DLAT, and is part of the multimeric pyruvate dehydrogenase complex that contains multiple copies of pyruvate dehydrogenase (E1), dihydrolipoamide acetyltransferase (DLAT, E2) and lipoamide dehydrogenase (DLD, E3). These subunits are bound to an inner core composed of about 48 DLAT and 12 PDHX molecules. Requires thiamine diphosphate as cofactor. Mg(2+) serves as cofactor. Phosphorylation at Ser-232, Ser-293 and Ser-300 by PDK family kinases inactivates the enzyme; for this phosphorylation at a single site is sufficient. Phosphorylation at Ser-293 interferes with access to active site, and thereby inactivates the enzyme. Dephosphorylation at all three sites, i.e. at Ser-232, Ser-293 and Ser-300, is required for reactivation. Post-translationally, acetylation alters the phosphorylation pattern. Deacetylated by SIRT3.

It localises to the mitochondrion matrix. It carries out the reaction N(6)-[(R)-lipoyl]-L-lysyl-[protein] + pyruvate + H(+) = N(6)-[(R)-S(8)-acetyldihydrolipoyl]-L-lysyl-[protein] + CO2. With respect to regulation, pyruvate dehydrogenase activity is inhibited by phosphorylation of PDHA1; it is reactivated by dephosphorylation. The pyruvate dehydrogenase complex catalyzes the overall conversion of pyruvate to acetyl-CoA and CO(2), and thereby links the glycolytic pathway to the tricarboxylic cycle. The chain is Pyruvate dehydrogenase E1 component subunit alpha, somatic form, mitochondrial (PDHA1) from Bos taurus (Bovine).